Here is a 113-residue protein sequence, read N- to C-terminus: uncharacterized protein (113 aa).

This is an uncharacterized protein from Haemophilus influenzae (strain ATCC 51907 / DSM 11121 / KW20 / Rd).